Consider the following 219-residue polypeptide: MESKLSFESFFYNESKKAYFQKLMEKLDEEYEKYQVFPNKKDLFRAIELTNFATLKIVIIGQDPYHRKGQADGLAFSTRTKILPPSLRNLFLEIKNAYPNFSKENGNLENWAKQGVLLLNHVLTVRKSSPNSHKNIGWEVFSSNLINFIVKNKVDIVFLLLGKKAKLAVKNINLEKQKVFAYSHPSPFSFAKSLKNSMVFRKINDFLKEKKRLEINWNL.

Aspartate 63 serves as the catalytic Proton acceptor.

The protein belongs to the uracil-DNA glycosylase (UDG) superfamily. UNG family.

The protein localises to the cytoplasm. It carries out the reaction Hydrolyzes single-stranded DNA or mismatched double-stranded DNA and polynucleotides, releasing free uracil.. Functionally, excises uracil residues from the DNA which can arise as a result of misincorporation of dUMP residues by DNA polymerase or due to deamination of cytosine. In Mesomycoplasma hyopneumoniae (strain 7448) (Mycoplasma hyopneumoniae), this protein is Uracil-DNA glycosylase.